Reading from the N-terminus, the 477-residue chain is Bifunctional protein HldE (477 aa).

The tract at residues Met-1 to Thr-318 is ribokinase. ATP is bound at residue Asn-195–Glu-198. Asp-264 is an active-site residue. The tract at residues Met-344–Asp-477 is cytidylyltransferase.

In the N-terminal section; belongs to the carbohydrate kinase PfkB family. It in the C-terminal section; belongs to the cytidylyltransferase family. As to quaternary structure, homodimer.

It carries out the reaction D-glycero-beta-D-manno-heptose 7-phosphate + ATP = D-glycero-beta-D-manno-heptose 1,7-bisphosphate + ADP + H(+). The catalysed reaction is D-glycero-beta-D-manno-heptose 1-phosphate + ATP + H(+) = ADP-D-glycero-beta-D-manno-heptose + diphosphate. It participates in nucleotide-sugar biosynthesis; ADP-L-glycero-beta-D-manno-heptose biosynthesis; ADP-L-glycero-beta-D-manno-heptose from D-glycero-beta-D-manno-heptose 7-phosphate: step 1/4. The protein operates within nucleotide-sugar biosynthesis; ADP-L-glycero-beta-D-manno-heptose biosynthesis; ADP-L-glycero-beta-D-manno-heptose from D-glycero-beta-D-manno-heptose 7-phosphate: step 3/4. In terms of biological role, catalyzes the phosphorylation of D-glycero-D-manno-heptose 7-phosphate at the C-1 position to selectively form D-glycero-beta-D-manno-heptose-1,7-bisphosphate. Its function is as follows. Catalyzes the ADP transfer from ATP to D-glycero-beta-D-manno-heptose 1-phosphate, yielding ADP-D-glycero-beta-D-manno-heptose. The sequence is that of Bifunctional protein HldE from Edwardsiella ictaluri (strain 93-146).